Consider the following 163-residue polypeptide: ADP-ribosylation factor-like protein 2-binding protein (163 aa).

Belongs to the ARL2BP family. In terms of assembly, interacts with GTP bound ARL2 and ARL3; the complex ARL2-ARL2BP as well as ARL2BP alone, binds to SLC25A4/ANT1. Interaction with ARL2 may be required for targeting to cilia basal body. Interacts with STAT3; interaction is enhanced with ARL2. Found in a complex with ARL2BP, ARL2 and SLC25A6. Found in a complex with ARL2, ARL2BP and SLC25A4. Interacts with STAT2, STAT3 and STAT4. In terms of tissue distribution, widely expressed, with most abundant activity in brain, especially in hippocampus and cortex. Also expressed in lung, cerebellum, liver, kidney, retina, spleen, muscle and heart (at protein level).

It is found in the cytoplasm. It localises to the mitochondrion intermembrane space. Its subcellular location is the cytoskeleton. The protein resides in the microtubule organizing center. The protein localises to the centrosome. It is found in the nucleus. It localises to the cilium basal body. Functionally, together with ARL2, plays a role in the nuclear translocation, retention and transcriptional activity of STAT3. May play a role as an effector of ARL2. The sequence is that of ADP-ribosylation factor-like protein 2-binding protein (Arl2bp) from Mus musculus (Mouse).